Reading from the N-terminus, the 130-residue chain is Small ribosomal subunit protein uS9 (130 aa).

It belongs to the universal ribosomal protein uS9 family.

This Yersinia enterocolitica serotype O:8 / biotype 1B (strain NCTC 13174 / 8081) protein is Small ribosomal subunit protein uS9.